Reading from the N-terminus, the 290-residue chain is Short-chain dehydrogenase srdE (290 aa).

Residues Ile11, Thr37, Asp58, and Asn86 each coordinate NADP(+). Residues Leu125–Val145 form a helical membrane-spanning segment. Tyr150 serves as a coordination point for NADP(+). Tyr150 (proton donor) is an active-site residue. Asn151 carries N-linked (GlcNAc...) asparagine glycosylation. NADP(+) is bound by residues Lys154, Val183, and Thr185. Lys154 functions as the Lowers pKa of active site Tyr in the catalytic mechanism.

This sequence belongs to the short-chain dehydrogenases/reductases (SDR) family.

Its subcellular location is the membrane. In terms of biological role, short-chain dehydrogenase; part of the gene cluster that mediates the biosynthesis of sordarial, a salicylic aldehyde structurally related to the phytotoxin pyriculol. The most interesting aspect of this pathway is formation of an aromatic product from the highly reducing polyketide synthase srdA. SrdA synthesizes a reduced polyketide chain from one molecule of acetyl-CoA and five molecules of malonyl-CoA. The polyketide chain is then reductively released as an aldehyde. The oxidoreductases srdC, srdD and srdE then oxidize one of the hydroxy groups to facilitate the intramolecular aldol condensation, followed by dehydration to yield a salicylic aldehyde. This aldehyde can undergo facile reduction by endogenous reductases to yield the alcohol 1-hydroxy-2-hydroxymethyl-3-pent-1,3-dienylbenzene. The flavin-dependent srdI counteract against the propensity of the aldehydes to be reduced under physiological conditions and is responsible for reoxidizing 1-hydroxy-2-hydroxymethyl-3-pent-1,3-dienylbenzene back to the salicylic aldehyde. This salicylic aldehyde is then selectively epoxidized by the cupin-domain-containing oxidoreductase srdB to yield the epoxide, which can be hydrolyzed stereoselectively by the hydrolase srdG to give the final product sordarial. This is Short-chain dehydrogenase srdE from Neurospora crassa (strain ATCC 24698 / 74-OR23-1A / CBS 708.71 / DSM 1257 / FGSC 987).